Consider the following 329-residue polypeptide: Endonuclease 8-like 2 (329 aa).

Residue P2 is the Schiff-base intermediate with DNA of the active site. E3 acts as the Proton donor in catalysis. K50 serves as the catalytic Proton donor; for beta-elimination activity. The residue at position 50 (K50) is an N6-acetyllysine. Position 68 is a phosphoserine (S68). A disordered region spans residues 88-112 (GPSAQEPSAGPSGSGEPVPSRSAET). K150 is modified (N6-acetyllysine). N227 serves as a coordination point for DNA. Residues 280-316 (QIYQKEQCPSGHQVMKETFGPPDGLQRLTWWCPQCQP) form an FPG-type zinc finger. R306 (proton donor; for delta-elimination activity) is an active-site residue.

It belongs to the FPG family. Binds EP300.

The protein localises to the nucleus. It catalyses the reaction 2'-deoxyribonucleotide-(2'-deoxyribose 5'-phosphate)-2'-deoxyribonucleotide-DNA = a 3'-end 2'-deoxyribonucleotide-(2,3-dehydro-2,3-deoxyribose 5'-phosphate)-DNA + a 5'-end 5'-phospho-2'-deoxyribonucleoside-DNA + H(+). Acetylation of Lys-50 leads to loss of DNA nicking activity. Its function is as follows. Involved in base excision repair of DNA damaged by oxidation or by mutagenic agents. Has DNA glycosylase activity towards 5-hydroxyuracil and other oxidized derivatives of cytosine with a preference for mismatched double-stranded DNA (DNA bubbles). Has low or no DNA glycosylase activity towards thymine glycol, 2-hydroxyadenine, hypoxanthine and 8-oxoguanine. Has AP (apurinic/apyrimidinic) lyase activity and introduces nicks in the DNA strand. Cleaves the DNA backbone by beta-delta elimination to generate a single-strand break at the site of the removed base with both 3'- and 5'-phosphates. This is Endonuclease 8-like 2 (Neil2) from Mus musculus (Mouse).